Consider the following 1181-residue polypeptide: Integrin alpha-7 (1181 aa).

The N-terminal stretch at 1-33 (MAGARSRDPWGASGICYLFGSLLVELLFSRAVA) is a signal peptide. The Extracellular portion of the chain corresponds to 34 to 1082 (FNLDVMGALR…MAVVAEGVPW (1049 aa)). FG-GAP repeat units follow at residues 35–103 (NLDV…ETDC), 110–175 (QGAD…IRDE), 185–238 (EGRP…SADL), 292–349 (DRLP…ASRL), 350–411 (VPEV…HWAG), 412–467 (ISPL…GVVA), and 471–530 (QVLE…IAPR). Residue asparagine 86 is glycosylated (N-linked (GlcNAc...) asparagine). Disulfide bonds link cysteine 94-cysteine 103, cysteine 140-cysteine 163, and cysteine 184-cysteine 197. Ca(2+) is bound by residues aspartate 372, asparagine 374, aspartate 376, aspartate 380, aspartate 434, asparagine 436, aspartate 438, aspartate 442, aspartate 492, aspartate 494, asparagine 496, tyrosine 498, and aspartate 500. Cystine bridges form between cysteine 539-cysteine 546, cysteine 552-cysteine 615, cysteine 681-cysteine 687, cysteine 781-cysteine 792, cysteine 939-cysteine 994, and cysteine 1001-cysteine 1006. The N-linked (GlcNAc...) asparagine glycan is linked to asparagine 786. A compositionally biased stretch (basic and acidic residues) spans 950–961 (VDSRDRRRRELE). The segment at 950 to 978 (VDSRDRRRRELEPPEQQEPGERQEPSMSW) is disordered. Residue asparagine 989 is glycosylated (N-linked (GlcNAc...) asparagine). N-linked (GlcNAc...) asparagine glycosylation is found at asparagine 1025 and asparagine 1045. The chain crosses the membrane as a helical span at residues 1083 to 1103 (WVILLAVLAGLLVLALLVLLL). The Cytoplasmic segment spans residues 1104–1181 (WKMGFFKRAK…PDGHPGPGTA (78 aa)). The GFFKR motif signature appears at 1107–1111 (GFFKR). Residues 1138–1181 (EKTGTILRNNWGSPRREGPDAHPILAADGHPELGPDGHPGPGTA) form a disordered region. A run of 3 repeats spans residues 1157–1160 (DAHP), 1165–1168 (DGHP), and 1173–1176 (DGHP). A 3 X 4 AA repeats of D-X-H-P region spans residues 1157–1176 (DAHPILAADGHPELGPDGHP).

This sequence belongs to the integrin alpha chain family. In terms of assembly, heterodimer of an alpha and a beta subunit. The alpha subunit is composed of a heavy and a light chain linked by a disulfide bond. Alpha-7 associates with beta-1. Interacts with COMP. Interacts (via C-terminus intracellular tail region) with CIB1; the interaction is stabilized/increased in a calcium- and magnesium-dependent manner. ADP-ribosylated on at least two sites of the extracellular domain in skeletal myotubes. In terms of processing, a 70 kDa form is created by proteolytic cleavage. Cleavage is elevated during myogenic differentiation and the cleaved form enhances cell adhesion and spreading on laminin. Isoforms containing segment A are predominantly expressed in skeletal muscle. Isoforms containing segment B are abundantly expressed in skeletal muscle, moderately in cardiac muscle, small intestine, colon, ovary and prostate and weakly in lung and testes. Isoforms containing segment X2D are expressed at low levels in fetal and adult skeletal muscle and in cardiac muscle, but are not detected in myoblasts and myotubes. In muscle fibers isoforms containing segment A and B are expressed at myotendinous and neuromuscular junctions; isoforms containing segment C are expressed at neuromuscular junctions and at extrasynaptic sites. Isoforms containing segments X1 or X2 or, at low levels, X1X2 are expressed in fetal and adult skeletal muscle (myoblasts and myotubes) and cardiac muscle.

The protein localises to the membrane. Its function is as follows. Integrin alpha-7/beta-1 is the primary laminin receptor on skeletal myoblasts and adult myofibers. During myogenic differentiation, it may induce changes in the shape and mobility of myoblasts, and facilitate their localization at laminin-rich sites of secondary fiber formation. It is involved in the maintenance of the myofibers cytoarchitecture as well as for their anchorage, viability and functional integrity. Isoform Alpha-7X2B and isoform Alpha-7X1B promote myoblast migration on laminin 1 and laminin 2/4, but isoform Alpha-7X1B is less active on laminin 1 (In vitro). Acts as a Schwann cell receptor for laminin-2. Acts as a receptor of COMP and mediates its effect on vascular smooth muscle cells (VSMCs) maturation. Required to promote contractile phenotype acquisition in differentiated airway smooth muscle (ASM) cells. The chain is Integrin alpha-7 (ITGA7) from Homo sapiens (Human).